Reading from the N-terminus, the 95-residue chain is Protein TusB (95 aa).

This sequence belongs to the DsrH/TusB family. As to quaternary structure, heterohexamer, formed by a dimer of trimers. The hexameric TusBCD complex contains 2 copies each of TusB, TusC and TusD. The TusBCD complex interacts with TusE.

The protein localises to the cytoplasm. In terms of biological role, part of a sulfur-relay system required for 2-thiolation of 5-methylaminomethyl-2-thiouridine (mnm(5)s(2)U) at tRNA wobble positions. The sequence is that of Protein TusB from Erwinia tasmaniensis (strain DSM 17950 / CFBP 7177 / CIP 109463 / NCPPB 4357 / Et1/99).